A 318-amino-acid chain; its full sequence is MYLITLLSTIVPILLAVAFLTLVERKILGYMQLRKGPNVVGPYGLLQPIADAVKLFTKEPLRPLTSSVSMFIIAPILALALALTMWTPLPMPHPLINMNLGILFMLAMSSLAVYAILWSGWASNSKYALIGALRAVAQTISYEVTLAIILLSILLMSGSYSLTTLITTQEYIWLILPSWPLTMMWFISTLAETNRAPFDLTEGESELVSGFNVEYAGGPFALFFLAEYANIIMMNALTTILFLGAYNNPMAPELYTTNFATKTLLLTMSFLWIRASYPRFRYDQLMHLLWKNFLPLTLALCMWYVTMPIMLASIPPQT.

Transmembrane regions (helical) follow at residues 3-23 (LITL…LTLV), 70-90 (MFII…TPLP), 100-120 (LGIL…LWSG), 146-166 (LAII…TTLI), 171-191 (YIWL…STLA), 222-242 (LFFL…TILF), 254-273 (LYTT…FLWI), and 294-314 (LPLT…LASI).

The protein belongs to the complex I subunit 1 family.

The protein resides in the mitochondrion inner membrane. The catalysed reaction is a ubiquinone + NADH + 5 H(+)(in) = a ubiquinol + NAD(+) + 4 H(+)(out). Core subunit of the mitochondrial membrane respiratory chain NADH dehydrogenase (Complex I) that is believed to belong to the minimal assembly required for catalysis. Complex I functions in the transfer of electrons from NADH to the respiratory chain. The immediate electron acceptor for the enzyme is believed to be ubiquinone. The protein is NADH-ubiquinone oxidoreductase chain 1 (MT-ND1) of Phyllostomus elongatus (Lesser spear-nosed bat).